An 86-amino-acid polypeptide reads, in one-letter code: Protein Tat (86 aa).

Positions 1–24 are interaction with human CREBBP; the sequence is MEPVDPRLEPWKHPGSQPKTACTN. The transactivation stretch occupies residues 1-48; it reads MEPVDPRLEPWKHPGSQPKTACTNCYCKKCCFHCQVCFITKALGISYG. Zn(2+) is bound by residues cysteine 22, cysteine 25, and cysteine 27. A cysteine-rich region spans residues 22–37; it reads CTNCYCKKCCFHCQVC. Lysine 28 carries the post-translational modification N6-acetyllysine; by host PCAF. Zn(2+)-binding residues include cysteine 30, histidine 33, cysteine 34, and cysteine 37. The segment at 38–48 is core; the sequence is FITKALGISYG. Residues 48–58 are compositionally biased toward basic residues; the sequence is GRKKRRQRRRP. The interval 48–86 is disordered; the sequence is GRKKRRQRRRPPQGSQTHQVSLSKQPTSQSRGDPTGPKE. Positions 49-57 match the Nuclear localization signal, RNA-binding (TAR), and protein transduction motif; that stretch reads RKKRRQRRR. Residues 49 to 86 form an interaction with the host capping enzyme RNGTT region; it reads RKKRRQRRRPPQGSQTHQVSLSKQPTSQSRGDPTGPKE. Lysine 50 and lysine 51 each carry N6-acetyllysine; by host EP300 and GCN5L2. Asymmetric dimethylarginine; by host PRMT6 is present on residues arginine 52 and arginine 53. Positions 62 to 79 are enriched in polar residues; it reads SQTHQVSLSKQPTSQSRG. Residue lysine 71 forms a Glycyl lysine isopeptide (Lys-Gly) (interchain with G-Cter in ubiquitin) linkage. A Cell attachment site motif is present at residues 78–80; the sequence is RGD.

It belongs to the lentiviruses Tat family. In terms of assembly, interacts with host CCNT1. Associates with the P-TEFb complex composed at least of Tat, P-TEFb (CDK9 and CCNT1), TAR RNA, RNA Pol II. Recruits the HATs CREBBP, TAF1/TFIID, EP300, PCAF and GCN5L2. Interacts with host KAT5/Tip60; this interaction targets the latter to degradation. Interacts with the host deacetylase SIRT1. Interacts with host capping enzyme RNGTT; this interaction stimulates RNGTT. Binds to host KDR, and to the host integrins ITGAV/ITGB3 and ITGA5/ITGB1. Interacts with host KPNB1/importin beta-1 without previous binding to KPNA1/importin alpha-1. Interacts with EIF2AK2. Interacts with host nucleosome assembly protein NAP1L1; this interaction may be required for the transport of Tat within the nucleus, since the two proteins interact at the nuclear rim. Interacts with host C1QBP/SF2P32; this interaction involves lysine-acetylated Tat. Interacts with the host chemokine receptors CCR2, CCR3 and CXCR4. Interacts with host DPP4/CD26; this interaction may trigger an anti-proliferative effect. Interacts with host LDLR. Interacts with the host extracellular matrix metalloproteinase MMP1. Interacts with host PRMT6; this interaction mediates Tat's methylation. Interacts with, and is ubiquitinated by MDM2/Hdm2. Interacts with host PSMC3 and HTATIP2. Interacts with STAB1; this interaction may overcome SATB1-mediated repression of IL2 and IL2RA (interleukin) in T cells by binding to the same domain than HDAC1. Interacts (when acetylated) with human CDK13, thereby increasing HIV-1 mRNA splicing and promoting the production of the doubly spliced HIV-1 protein Nef. Interacts with host TBP; this interaction modulates the activity of transcriptional pre-initiation complex. Interacts with host RELA. Interacts with host PLSCR1; this interaction negatively regulates Tat transactivation activity by altering its subcellular distribution. In terms of processing, asymmetrical arginine methylation by host PRMT6 seems to diminish the transactivation capacity of Tat and affects the interaction with host CCNT1. Post-translationally, acetylation by EP300, CREBBP, GCN5L2/GCN5 and PCAF regulates the transactivation activity of Tat. EP300-mediated acetylation of Lys-50 promotes dissociation of Tat from the TAR RNA through the competitive binding to PCAF's bromodomain. In addition, the non-acetylated Tat's N-terminus can also interact with PCAF. PCAF-mediated acetylation of Lys-28 enhances Tat's binding to CCNT1. Lys-50 is deacetylated by SIRT1. Polyubiquitination by host MDM2 does not target Tat to degradation, but activates its transactivation function and fosters interaction with CCNT1 and TAR RNA. In terms of processing, phosphorylated by EIF2AK2 on serine and threonine residues adjacent to the basic region important for TAR RNA binding and function. Phosphorylation of Tat by EIF2AK2 is dependent on the prior activation of EIF2AK2 by dsRNA.

The protein localises to the host nucleus. Its subcellular location is the host nucleolus. It localises to the host cytoplasm. The protein resides in the secreted. Its function is as follows. Transcriptional activator that increases RNA Pol II processivity, thereby increasing the level of full-length viral transcripts. Recognizes a hairpin structure at the 5'-LTR of the nascent viral mRNAs referred to as the transactivation responsive RNA element (TAR) and recruits the cyclin T1-CDK9 complex (P-TEFb complex) that will in turn hyperphosphorylate the RNA polymerase II to allow efficient elongation. The CDK9 component of P-TEFb and other Tat-activated kinases hyperphosphorylate the C-terminus of RNA Pol II that becomes stabilized and much more processive. Other factors such as HTATSF1/Tat-SF1, SUPT5H/SPT5, and HTATIP2 are also important for Tat's function. Besides its effect on RNA Pol II processivity, Tat induces chromatin remodeling of proviral genes by recruiting the histone acetyltransferases (HATs) CREBBP, EP300 and PCAF to the chromatin. This also contributes to the increase in proviral transcription rate, especially when the provirus integrates in transcriptionally silent region of the host genome. To ensure maximal activation of the LTR, Tat mediates nuclear translocation of NF-kappa-B by interacting with host RELA. Through its interaction with host TBP, Tat may also modulate transcription initiation. Tat can reactivate a latently infected cell by penetrating in it and transactivating its LTR promoter. In the cytoplasm, Tat is thought to act as a translational activator of HIV-1 mRNAs. Functionally, extracellular circulating Tat can be endocytosed by surrounding uninfected cells via the binding to several surface receptors such as CD26, CXCR4, heparan sulfate proteoglycans (HSPG) or LDLR. Neurons are rarely infected, but they internalize Tat via their LDLR. Through its interaction with nuclear HATs, Tat is potentially able to control the acetylation-dependent cellular gene expression. Modulates the expression of many cellular genes involved in cell survival, proliferation or in coding for cytokines or cytokine receptors. Tat plays a role in T-cell and neurons apoptosis. Tat induced neurotoxicity and apoptosis probably contribute to neuroAIDS. Circulating Tat also acts as a chemokine-like and/or growth factor-like molecule that binds to specific receptors on the surface of the cells, affecting many cellular pathways. In the vascular system, Tat binds to ITGAV/ITGB3 and ITGA5/ITGB1 integrins dimers at the surface of endothelial cells and competes with bFGF for heparin-binding sites, leading to an excess of soluble bFGF. This is Protein Tat from Homo sapiens (Human).